Here is a 78-residue protein sequence, read N- to C-terminus: Cytochrome c oxidase subunit 8, mitochondrial (78 aa).

The transit peptide at 1–27 (MLCQQMIRTTAKRSSNIMTRPIIMKRS) directs the protein to the mitochondrion. Over 28-51 (VHFKDGVYENIPFKVKGRKTPYAL) the chain is Mitochondrial matrix. The chain crosses the membrane as a helical span at residues 52-73 (SHFGFFAIGFAVPFVACYVQLK). Lysine 74 is a topological domain (mitochondrial intermembrane). Residues 75–78 (SGAF) constitute a propeptide that is removed on maturation.

Belongs to the cytochrome c oxidase VIIc family. Component of the cytochrome c oxidase (complex IV, CIV), a multisubunit enzyme composed of 12 subunits. The complex is composed of a catalytic core of 3 subunits COX1, COX2 and COX3, encoded in the mitochondrial DNA, and 9 supernumerary subunits COX4, COX5A (or COX5B), COX6, COX7, COX8, COX9, COX12, COX13 and COX26, which are encoded in the nuclear genome. The complex exists as a monomer or a dimer and forms supercomplexes (SCs) in the inner mitochondrial membrane with a dimer of ubiquinol-cytochrome c oxidoreductase (cytochrome b-c1 complex, complex III, CIII), resulting in 2 different assemblies (supercomplexes III(2)IV and III(2)IV(2)).

The protein resides in the mitochondrion inner membrane. The protein operates within energy metabolism; oxidative phosphorylation. Its function is as follows. Component of the cytochrome c oxidase, the last enzyme in the mitochondrial electron transport chain which drives oxidative phosphorylation. The respiratory chain contains 3 multisubunit complexes succinate dehydrogenase (complex II, CII), ubiquinol-cytochrome c oxidoreductase (cytochrome b-c1 complex, complex III, CIII) and cytochrome c oxidase (complex IV, CIV), that cooperate to transfer electrons derived from NADH and succinate to molecular oxygen, creating an electrochemical gradient over the inner membrane that drives transmembrane transport and the ATP synthase. Cytochrome c oxidase is the component of the respiratory chain that catalyzes the reduction of oxygen to water. Electrons originating from reduced cytochrome c in the intermembrane space (IMS) are transferred via the dinuclear copper A center (CU(A)) of COX2 and heme A of COX1 to the active site in COX1, a binuclear center (BNC) formed by heme A3 and copper B (CU(B)). The BNC reduces molecular oxygen to 2 water molecules using 4 electrons from cytochrome c in the IMS and 4 protons from the mitochondrial matrix. The polypeptide is Cytochrome c oxidase subunit 8, mitochondrial (COX8) (Saccharomyces cerevisiae (strain ATCC 204508 / S288c) (Baker's yeast)).